Consider the following 537-residue polypeptide: Beta-arabinofuranosyltransferase RAY1 (537 aa).

Positions 370-372 match the DXD motif motif; it reads DVD.

Belongs to the glycosyltransferase 77 family.

Beta-arabinofuranosyltransferase that transfers specifically an arabinosyl residue from UDP-arabinofuranose to the monosaccharide galactose or beta-methyl-galactoside in vitro. Catalyzes the addition of a beta-arabinofuranose residue onto a beta-galactosyl residue of an Yariv-precipitable wall polymer in vivo. The polypeptide is Beta-arabinofuranosyltransferase RAY1 (Arabidopsis thaliana (Mouse-ear cress)).